The following is a 467-amino-acid chain: F-box/kelch-repeat protein SKIP11 (467 aa).

The tract at residues 77–117 is disordered; the sequence is LSGGEEQADAAIGDGSSSRQEQEQQSDFNDNGGDSSDSHSL. Residues 92-111 show a composition bias toward low complexity; the sequence is SSSRQEQEQQSDFNDNGGDS. Residues 116–163 enclose the F-box domain; the sequence is SLINEIGRDNSIDCLIRCSRSDYGSIASLNRNFRSLVKSGEIYRLRRQ. 5 Kelch repeats span residues 159-210, 215-259, 261-307, 308-356, and 365-411; these read RLRR…KESL, DLLV…SLGE, AIFA…FMDG, KFYV…DMSP, and AVVN…GLAF.

As to quaternary structure, part of a SCF (ASK-cullin-F-box) protein ligase complex. Interacts with SKP1A/ASK1 and SPK1B/ASK2.

It is found in the nucleus. The protein operates within protein modification; protein ubiquitination. Its function is as follows. Component of SCF(ASK-cullin-F-box) E3 ubiquitin ligase complexes, which may mediate the ubiquitination and subsequent proteasomal degradation of target proteins. This is F-box/kelch-repeat protein SKIP11 (SKIP11) from Arabidopsis thaliana (Mouse-ear cress).